The sequence spans 289 residues: Phospholipase A1 (289 aa).

Residues 1–20 (MRTGPGWLLAAAALPFFACA) form the signal peptide. The Periplasmic segment spans residues 21 to 52 (QEATIDKVHDTPAVRGSIIANMLQEHDNPFTL). Residues 53-65 (YPYESNYLLYTYT) traverse the membrane as a beta stranded segment. Residues 66–84 (SDLNKKAIESYNWSDNANK) lie on the Extracellular side of the membrane. A beta stranded membrane pass occupies residues 85 to 99 (DEVKFQLSLAFPLWR). Topologically, residues 100–105 (GILGDN) are periplasmic. A beta stranded transmembrane segment spans residues 106 to 118 (SLLGASYTQRSWW). Residues 119-128 (QLSNTGESAP) are Extracellular-facing. Ca(2+) is bound at residue S126. A beta stranded transmembrane segment spans residues 129 to 148 (FRETNYEPQLFLGFATDYSV). Over 149-150 (GD) the chain is Periplasmic. A beta stranded membrane pass occupies residues 151-164 (WTLRDAEFGYNHQS). H162 functions as the Proton acceptor in the catalytic mechanism. S164 acts as the Nucleophile in catalysis. The Extracellular portion of the chain corresponds to 165 to 173 (NGRSDPTSR). The Ca(2+) site is built by R167 and S172. The beta stranded transmembrane segment at 174 to 186 (SWNRLYSRLMAQN) threads the bilayer. Over 187–188 (GN) the chain is Periplasmic. A beta stranded membrane pass occupies residues 189–198 (WLVEVKPWYV). At 199–216 (IGDTSDNKNITKYMGYYQ) the chain is on the extracellular side. D204 contacts Ca(2+). A beta stranded membrane pass occupies residues 217–223 (LKIGYQL). The Periplasmic segment spans residues 224 to 225 (GE). Residues 226-234 (AVLSAKGQY) traverse the membrane as a beta stranded segment. Over 235-241 (NWNTGYG) the chain is Extracellular. A beta stranded membrane pass occupies residues 242–250 (GAELGVSYP). Topologically, residues 251-255 (ITKHV) are periplasmic. Residues 256–265 (RFYTQVYSGY) form a beta stranded membrane-spanning segment. At 266–274 (GESLIDYDF) the chain is on the extracellular side. A beta stranded transmembrane segment spans residues 275–286 (NQTRVGMGVMLN). Over 287-289 (DLF) the chain is Periplasmic.

It belongs to the phospholipase A1 family. Homodimer; dimerization is reversible, and the dimeric form is the active one. The cofactor is Ca(2+).

The protein localises to the cell outer membrane. It carries out the reaction a 1,2-diacyl-sn-glycero-3-phosphocholine + H2O = a 2-acyl-sn-glycero-3-phosphocholine + a fatty acid + H(+). The catalysed reaction is a 1,2-diacyl-sn-glycero-3-phosphocholine + H2O = a 1-acyl-sn-glycero-3-phosphocholine + a fatty acid + H(+). In terms of biological role, hydrolysis of phosphatidylcholine with phospholipase A2 (EC 3.1.1.4) and phospholipase A1 (EC 3.1.1.32) activities. The polypeptide is Phospholipase A1 (pldA) (Proteus vulgaris).